The following is a 145-amino-acid chain: D-aminoacyl-tRNA deacylase (145 aa).

Residues 137–138 (GP) carry the Gly-cisPro motif, important for rejection of L-amino acids motif.

The protein belongs to the DTD family. Homodimer.

The protein localises to the cytoplasm. The catalysed reaction is glycyl-tRNA(Ala) + H2O = tRNA(Ala) + glycine + H(+). It catalyses the reaction a D-aminoacyl-tRNA + H2O = a tRNA + a D-alpha-amino acid + H(+). Functionally, an aminoacyl-tRNA editing enzyme that deacylates mischarged D-aminoacyl-tRNAs. Also deacylates mischarged glycyl-tRNA(Ala), protecting cells against glycine mischarging by AlaRS. Acts via tRNA-based rather than protein-based catalysis; rejects L-amino acids rather than detecting D-amino acids in the active site. By recycling D-aminoacyl-tRNA to D-amino acids and free tRNA molecules, this enzyme counteracts the toxicity associated with the formation of D-aminoacyl-tRNA entities in vivo and helps enforce protein L-homochirality. The polypeptide is D-aminoacyl-tRNA deacylase (Aeromonas hydrophila subsp. hydrophila (strain ATCC 7966 / DSM 30187 / BCRC 13018 / CCUG 14551 / JCM 1027 / KCTC 2358 / NCIMB 9240 / NCTC 8049)).